The sequence spans 362 residues: 3-dehydroquinate synthase (362 aa).

NAD(+) is bound by residues 72–77 (DGEAHK), 106–110 (GVIGD), 130–131 (TT), K143, and K152. Zn(2+)-binding residues include E185, H248, and H265.

Belongs to the sugar phosphate cyclases superfamily. Dehydroquinate synthase family. Co(2+) serves as cofactor. It depends on Zn(2+) as a cofactor. NAD(+) is required as a cofactor.

It localises to the cytoplasm. The catalysed reaction is 7-phospho-2-dehydro-3-deoxy-D-arabino-heptonate = 3-dehydroquinate + phosphate. It participates in metabolic intermediate biosynthesis; chorismate biosynthesis; chorismate from D-erythrose 4-phosphate and phosphoenolpyruvate: step 2/7. Its function is as follows. Catalyzes the conversion of 3-deoxy-D-arabino-heptulosonate 7-phosphate (DAHP) to dehydroquinate (DHQ). The chain is 3-dehydroquinate synthase from Laribacter hongkongensis (strain HLHK9).